A 262-amino-acid chain; its full sequence is Proenkephalin-A-A (262 aa).

Residues 1–24 form the signal peptide; the sequence is MGLEARHCCMFLLVFASLSVEIRA. Cystine bridges form between Cys26–Cys48, Cys30–Cys52, and Cys33–Cys65. 5 propeptides span residues 110–131, 139–177, 190–201, 211–221, and 229–253; these read MDELYHAEPEEDDAGGEILAKN, EYDSDRDAADLLRELLATSGDPESSIYHDNNSETPGEIN, STDLEDETSGIQ, VGRPEWWEDYQ, and TRFTDSFLPSDEDGESYSKENPDME.

The protein belongs to the opioid neuropeptide precursor family. In terms of processing, the N-terminal domain contains 6 conserved cysteines thought to be involved in disulfide bonding and/or processing.

It is found in the secreted. In terms of biological role, enkephalin neuropeptides compete with and mimic the effects of opiate drugs. They play a role in a number of physiologic functions, including pain perception and responses to stress. The protein is Proenkephalin-A-A (penk-a) of Xenopus laevis (African clawed frog).